The chain runs to 269 residues: 3-methyl-2-oxobutanoate hydroxymethyltransferase (269 aa).

Positions 48 and 87 each coordinate Mg(2+). 3-methyl-2-oxobutanoate contacts are provided by residues 48 to 49 (DS), D87, and K117. Mg(2+) is bound at residue E119. E186 functions as the Proton acceptor in the catalytic mechanism.

Belongs to the PanB family. Homodecamer; pentamer of dimers. Mg(2+) serves as cofactor.

Its subcellular location is the cytoplasm. It carries out the reaction 3-methyl-2-oxobutanoate + (6R)-5,10-methylene-5,6,7,8-tetrahydrofolate + H2O = 2-dehydropantoate + (6S)-5,6,7,8-tetrahydrofolate. It functions in the pathway cofactor biosynthesis; (R)-pantothenate biosynthesis; (R)-pantoate from 3-methyl-2-oxobutanoate: step 1/2. Catalyzes the reversible reaction in which hydroxymethyl group from 5,10-methylenetetrahydrofolate is transferred onto alpha-ketoisovalerate to form ketopantoate. The polypeptide is 3-methyl-2-oxobutanoate hydroxymethyltransferase (Moorella thermoacetica (strain ATCC 39073 / JCM 9320)).